The chain runs to 193 residues: Fibrillarin-like rRNA/tRNA 2'-O-methyltransferase (193 aa).

Residues 82 to 83 (TT), 100 to 101 (EF), 125 to 126 (DA), and 145 to 148 (DVAQ) contribute to the S-adenosyl-L-methionine site.

It belongs to the methyltransferase superfamily. Fibrillarin family. As to quaternary structure, interacts with nop5. Component of box C/D small ribonucleoprotein (sRNP) particles that contain rpl7ae, FlpA and nop5, plus a guide RNA.

Its function is as follows. Involved in pre-rRNA and tRNA processing. Utilizes the methyl donor S-adenosyl-L-methionine to catalyze the site-specific 2'-hydroxyl methylation of ribose moieties in rRNA and tRNA. Site specificity is provided by a guide RNA that base pairs with the substrate. Methylation occurs at a characteristic distance from the sequence involved in base pairing with the guide RNA. This is Fibrillarin-like rRNA/tRNA 2'-O-methyltransferase from Methanosarcina mazei (Methanosarcina frisia).